A 176-amino-acid polypeptide reads, in one-letter code: MIDKRRPQRDLPKINERIRFPEIRVIDSDGSQVGVITPKEALSLAQEKELDLVLVSETAKPPVCRIMDYGKYKFEQEKKAREAKKKQHTADVKEVKMRYKIGESDYNVRVNQAKRFLKSGDKVKATVTFRGREIQHANLAQELLERMAKDLEELAEIQQAPKREGRNMMMFLTPKK.

This sequence belongs to the IF-3 family. As to quaternary structure, monomer.

The protein localises to the cytoplasm. IF-3 binds to the 30S ribosomal subunit and shifts the equilibrium between 70S ribosomes and their 50S and 30S subunits in favor of the free subunits, thus enhancing the availability of 30S subunits on which protein synthesis initiation begins. The polypeptide is Translation initiation factor IF-3 (Rippkaea orientalis (strain PCC 8801 / RF-1) (Cyanothece sp. (strain PCC 8801))).